Consider the following 776-residue polypeptide: Protein SEY1 (776 aa).

Residues Met-1–His-681 lie on the Cytoplasmic side of the membrane. In terms of domain architecture, GB1/RHD3-type G spans Gly-34 to Tyr-263. Gly-44–Ser-51 contributes to the GTP binding site. Residues Ile-682–Ile-702 traverse the membrane as a helical segment. At Arg-703–Pro-705 the chain is on the lumenal side. A helical transmembrane segment spans residues Leu-706–Leu-726. Topologically, residues Trp-727–Lys-776 are cytoplasmic.

Belongs to the TRAFAC class dynamin-like GTPase superfamily. GB1/RHD3 GTPase family. RHD3 subfamily. As to quaternary structure, interacts with RTN1 and YOP1; GTP binding is not required for these interactions.

The protein resides in the endoplasmic reticulum membrane. Cooperates with the reticulon proteins RTN1 and RTN2 and the tubule-shaping DP1 family protein YOP1 to generate and maintain the structure of the tubular endoplasmic reticulum network. Has GTPase activity, which is required for its function in ER organization. This is Protein SEY1 from Saccharomyces cerevisiae (strain ATCC 204508 / S288c) (Baker's yeast).